The sequence spans 263 residues: S-acyl fatty acid synthase thioesterase, medium chain (263 aa).

An N-acetylmethionine modification is found at methionine 1. Catalysis depends on residues serine 101 and histidine 237. The segment at 262-263 is important for interaction with FASN; sequence LT.

The protein belongs to the thioesterase family. As to quaternary structure, interacts (via C-terminus) with FASN.

The protein localises to the cytoplasm. It is found in the cytosol. The catalysed reaction is (9Z)-octadecenoyl-[ACP] + H2O = (9Z)-octadecenoate + holo-[ACP] + H(+). It catalyses the reaction decanoyl-CoA + H2O = decanoate + CoA + H(+). The enzyme catalyses dodecanoyl-CoA + H2O = dodecanoate + CoA + H(+). It carries out the reaction tetradecanoyl-CoA + H2O = tetradecanoate + CoA + H(+). The catalysed reaction is hexadecanoyl-CoA + H2O = hexadecanoate + CoA + H(+). Contributes to the release of free fatty acids from fatty acid synthase (FASN). Has broad substrate specificity, giving rise to a range of free fatty acids with chain lengths between 10 and 16 carbon atoms (C10 - C16). The polypeptide is S-acyl fatty acid synthase thioesterase, medium chain (Rattus norvegicus (Rat)).